Consider the following 670-residue polypeptide: UvrABC system protein B (670 aa).

The Helicase ATP-binding domain occupies 51 to 433 (DGLKKGEPFQ…SSRVVEQIIR (383 aa)). 64–71 (GVTGSGKT) serves as a coordination point for ATP. Positions 117 to 140 (YYDYYQPESYLPAKDQYIEKDAMI) match the Beta-hairpin motif. One can recognise a Helicase C-terminal domain in the interval 453–612 (DVMQEIRKIV…IVPTTIRKPI (160 aa)). The UVR domain occupies 631-666 (PNVIIELDAEMREAADRLDFERAIQVRELIKKLEKE).

The protein belongs to the UvrB family. In terms of assembly, forms a heterotetramer with UvrA during the search for lesions. Interacts with UvrC in an incision complex.

The protein localises to the cytoplasm. In terms of biological role, the UvrABC repair system catalyzes the recognition and processing of DNA lesions. A damage recognition complex composed of 2 UvrA and 2 UvrB subunits scans DNA for abnormalities. Upon binding of the UvrA(2)B(2) complex to a putative damaged site, the DNA wraps around one UvrB monomer. DNA wrap is dependent on ATP binding by UvrB and probably causes local melting of the DNA helix, facilitating insertion of UvrB beta-hairpin between the DNA strands. Then UvrB probes one DNA strand for the presence of a lesion. If a lesion is found the UvrA subunits dissociate and the UvrB-DNA preincision complex is formed. This complex is subsequently bound by UvrC and the second UvrB is released. If no lesion is found, the DNA wraps around the other UvrB subunit that will check the other stand for damage. This Methanosarcina mazei (strain ATCC BAA-159 / DSM 3647 / Goe1 / Go1 / JCM 11833 / OCM 88) (Methanosarcina frisia) protein is UvrABC system protein B.